Here is a 698-residue protein sequence, read N- to C-terminus: MSEQLPLLIELGTEELPVKALPGLAQAFFDGVLAGLEKRGVAVTRGDAKPLSTPRRLAVLLPGVATEQPEQRSEVLGPYLNIALDAEGKPTRALAGFAAKAGIDWTALERTSDAKGERFVHRAVTPGAQAAALLPEILREAIAAMPIPKPMRWGAHEYAFARPVQWLVLLFGDTVIPAELLGVRGDRITRGHRFMHDGDIALAAPGDYIDALRAAHVLVDADARRARIVEEVDAAARQAGGSARISDDNLEQVVNLVEWPSAVLCSFERAFLAVPQEALIETMEINQKFFPVLDDGGKLTEQFIGIANIVSKDVAEVAKGYERVIRPRFADAKFFFDEDLKQGLEAMGAGLASVTYQAKLGTVADKVARVAALAEAIAPQVGADPVQARRAAELAKNDLQSRMVNEFPELQGIAGRHYAKAAGEPSEISLAIDEAYQPRFAGDDIALSPLGKVLAIAERLDTLAGGFAAGLKPTGNKDPFALRRNALGLARTVIESGFDLDLPKLIDVGLASLPDAVKPHADRNTETVRADLYDFILDRLKGYYADKGVAATHFNAVAELKPASLYDFDRRIDAIGIFATLPEAEALAAANKRIRNILRKVEGEIPGDIDTTLLREPAEEALAEAVEAAIGDTGDALHRHDYVAVLARLARLRPQVDAFFDGVMVNADDPQLRANRLALLKKLGDRLGSVAAIEHLSS.

Belongs to the class-II aminoacyl-tRNA synthetase family. Tetramer of two alpha and two beta subunits.

The protein localises to the cytoplasm. The enzyme catalyses tRNA(Gly) + glycine + ATP = glycyl-tRNA(Gly) + AMP + diphosphate. The chain is Glycine--tRNA ligase beta subunit from Xanthomonas campestris pv. campestris (strain 8004).